The following is a 406-amino-acid chain: Tryptophan synthase beta chain (406 aa).

An N6-(pyridoxal phosphate)lysine modification is found at lysine 95.

Belongs to the TrpB family. In terms of assembly, tetramer of two alpha and two beta chains. It depends on pyridoxal 5'-phosphate as a cofactor.

The enzyme catalyses (1S,2R)-1-C-(indol-3-yl)glycerol 3-phosphate + L-serine = D-glyceraldehyde 3-phosphate + L-tryptophan + H2O. It participates in amino-acid biosynthesis; L-tryptophan biosynthesis; L-tryptophan from chorismate: step 5/5. Functionally, the beta subunit is responsible for the synthesis of L-tryptophan from indole and L-serine. This chain is Tryptophan synthase beta chain, found in Pseudomonas fluorescens (strain ATCC BAA-477 / NRRL B-23932 / Pf-5).